The following is a 233-amino-acid chain: MWSGLLPPGLNESDAESNSEDEATLENSGLNLQEDKEDESIRKTEIIDFSTDEPKTETESNVNAYEECPSGIPIDMWNKFQELHKKHSEQKSTTSRFRGKRRKRSRKDKLKNEKELHSEPSSNETQWKELTQYFGVNDRFDPPVKRKKVEKSGLEKRIDQAVEEWNIEKAEELSNQLATRELGVKIAKAVACHNFVKAKKEVENSQAARKKKKLAWGFEAKKRWETKSNMGYM.

Residues 1–126 (MWSGLLPPGL…HSEPSSNETQ (126 aa)) are disordered. Acidic residues predominate over residues 13 to 24 (SDAESNSEDEAT). Residues 39–58 (ESIRKTEIIDFSTDEPKTET) show a composition bias toward basic and acidic residues. A compositionally biased stretch (basic residues) spans 97–109 (FRGKRRKRSRKDK). The stretch at 144–164 (VKRKKVEKSGLEKRIDQAVEE) forms a coiled coil.

The chain is Protein FAM204A (FAM204A) from Homo sapiens (Human).